The following is a 543-amino-acid chain: Hydroxylamine reductase (543 aa).

4 residues coordinate [4Fe-4S] cluster: Cys-5, Cys-8, Cys-17, and Cys-23. Hybrid [4Fe-2O-2S] cluster contacts are provided by His-236, Glu-260, Cys-304, Cys-398, Cys-426, Cys-451, Glu-486, and Lys-488. Position 398 is a cysteine persulfide (Cys-398).

This sequence belongs to the HCP family. [4Fe-4S] cluster is required as a cofactor. Hybrid [4Fe-2O-2S] cluster serves as cofactor.

Its subcellular location is the cytoplasm. The enzyme catalyses A + NH4(+) + H2O = hydroxylamine + AH2 + H(+). Functionally, catalyzes the reduction of hydroxylamine to form NH(3) and H(2)O. The protein is Hydroxylamine reductase of Bacteroides fragilis (strain ATCC 25285 / DSM 2151 / CCUG 4856 / JCM 11019 / LMG 10263 / NCTC 9343 / Onslow / VPI 2553 / EN-2).